A 235-amino-acid polypeptide reads, in one-letter code: Leucyl/phenylalanyl-tRNA--protein transferase (235 aa).

Belongs to the L/F-transferase family.

Its subcellular location is the cytoplasm. It catalyses the reaction N-terminal L-lysyl-[protein] + L-leucyl-tRNA(Leu) = N-terminal L-leucyl-L-lysyl-[protein] + tRNA(Leu) + H(+). The catalysed reaction is N-terminal L-arginyl-[protein] + L-leucyl-tRNA(Leu) = N-terminal L-leucyl-L-arginyl-[protein] + tRNA(Leu) + H(+). It carries out the reaction L-phenylalanyl-tRNA(Phe) + an N-terminal L-alpha-aminoacyl-[protein] = an N-terminal L-phenylalanyl-L-alpha-aminoacyl-[protein] + tRNA(Phe). Its function is as follows. Functions in the N-end rule pathway of protein degradation where it conjugates Leu, Phe and, less efficiently, Met from aminoacyl-tRNAs to the N-termini of proteins containing an N-terminal arginine or lysine. The sequence is that of Leucyl/phenylalanyl-tRNA--protein transferase from Anaeromyxobacter sp. (strain Fw109-5).